The chain runs to 305 residues: Peroxisome biogenesis factor 2 (305 aa).

Residues Met1–Leu15 are Peroxisomal matrix-facing. A helical transmembrane segment spans residues Arg16–His42. Residues Gly43–Leu48 are Cytoplasmic-facing. Residues Leu49–Ala74 traverse the membrane as a helical segment. Residues Thr75–Pro98 are Peroxisomal matrix-facing. Residues Ser99–Arg125 traverse the membrane as a helical segment. At Asn126–Gly133 the chain is on the cytoplasmic side. Residues Lys134–Lys160 traverse the membrane as a helical segment. The Peroxisomal matrix segment spans residues Gly161–Gly187. Residues Phe188 to Ile211 form a helical membrane-spanning segment. Residues Asn212 to Leu305 are Cytoplasmic-facing. Zn(2+) contacts are provided by Cys244, Cys247, Cys259, His261, Cys264, Cys267, Cys280, and Cys283. The segment at Cys244–Gly284 adopts an RING-type zinc-finger fold.

This sequence belongs to the pex2/pex10/pex12 family. As to quaternary structure, component of the PEX2-PEX10-PEX12 retrotranslocation channel, composed of PEX2, PEX10 and PEX12. In terms of processing, forms intramolecular and intermolecular disulfide bonds in response to reactive oxygen species (ROS), promoting higher stability.

It localises to the peroxisome membrane. It catalyses the reaction [E2 ubiquitin-conjugating enzyme]-S-ubiquitinyl-L-cysteine + [acceptor protein]-L-cysteine = [E2 ubiquitin-conjugating enzyme]-L-cysteine + [acceptor protein]-S-ubiquitinyl-L-cysteine.. The catalysed reaction is S-ubiquitinyl-[E2 ubiquitin-conjugating enzyme]-L-cysteine + [acceptor protein]-L-lysine = [E2 ubiquitin-conjugating enzyme]-L-cysteine + N(6)-ubiquitinyl-[acceptor protein]-L-lysine.. It participates in protein modification; protein ubiquitination. In terms of biological role, E3 ubiquitin-protein ligase component of a retrotranslocation channel required for peroxisome organization by mediating export of the PEX5 receptor from peroxisomes to the cytosol, thereby promoting PEX5 recycling. The retrotranslocation channel is composed of PEX2, PEX10 and PEX12; each subunit contributing transmembrane segments that coassemble into an open channel that specifically allows the passage of PEX5 through the peroxisomal membrane. PEX2 also regulates peroxisome organization by acting as a E3 ubiquitin-protein ligase. PEX2 ubiquitinates PEX5 during its passage through the retrotranslocation channel: catalyzes monoubiquitination of PEX5 at 'Cys-11', a modification that acts as a signal for PEX5 extraction into the cytosol. Required for pexophagy in response to starvation by mediating ubiquitination of peroxisomal proteins, such as PEX5 and ABCD3/PMP70. Also involved in the response to reactive oxygen species (ROS) by mediating 'Lys-48'-linked polyubiquitination and subsequent degradation of PNPLA2/ATGL, thereby regulating lipolysis. The polypeptide is Peroxisome biogenesis factor 2 (Pex2) (Rattus norvegicus (Rat)).